Reading from the N-terminus, the 266-residue chain is Aspartate/glutamate leucyltransferase (266 aa).

The protein belongs to the R-transferase family. Bpt subfamily.

The protein localises to the cytoplasm. It catalyses the reaction N-terminal L-glutamyl-[protein] + L-leucyl-tRNA(Leu) = N-terminal L-leucyl-L-glutamyl-[protein] + tRNA(Leu) + H(+). It carries out the reaction N-terminal L-aspartyl-[protein] + L-leucyl-tRNA(Leu) = N-terminal L-leucyl-L-aspartyl-[protein] + tRNA(Leu) + H(+). Its function is as follows. Functions in the N-end rule pathway of protein degradation where it conjugates Leu from its aminoacyl-tRNA to the N-termini of proteins containing an N-terminal aspartate or glutamate. The polypeptide is Aspartate/glutamate leucyltransferase (Rhizorhabdus wittichii (strain DSM 6014 / CCUG 31198 / JCM 15750 / NBRC 105917 / EY 4224 / RW1) (Sphingomonas wittichii)).